An 826-amino-acid polypeptide reads, in one-letter code: Periplasmic nitrate reductase (826 aa).

The tat-type signal signal peptide spans 1–32 (MSISRREFLKANAAVAAATAVGATLPVKIVEA). The 4Fe-4S Mo/W bis-MGD-type domain maps to 39 to 95 (IKWDKAPCRFCGVGCSVLVGTDNGKVVATKGDPESPVNKGLNCIKGYFLSKIMYGKD). [4Fe-4S] cluster is bound by residues Cys46, Cys49, Cys53, and Cys81. Residues Lys83, Gln150, Asn175, Cys179, 212–219 (WGANMAEM), 262–264 (QSD), Met372, Gln376, Asn482, 508–509 (SD), Lys531, Asp558, and 716–725 (TGRVLEHWHT) each bind Mo-bis(molybdopterin guanine dinucleotide). Phe792 provides a ligand contact to substrate. 2 residues coordinate Mo-bis(molybdopterin guanine dinucleotide): Asn800 and Lys817.

It belongs to the prokaryotic molybdopterin-containing oxidoreductase family. NasA/NapA/NarB subfamily. Component of the periplasmic nitrate reductase NapAB complex composed of NapA and NapB. The cofactor is [4Fe-4S] cluster. Mo-bis(molybdopterin guanine dinucleotide) serves as cofactor. In terms of processing, predicted to be exported by the Tat system. The position of the signal peptide cleavage has not been experimentally proven.

Its subcellular location is the periplasm. The catalysed reaction is 2 Fe(II)-[cytochrome] + nitrate + 2 H(+) = 2 Fe(III)-[cytochrome] + nitrite + H2O. Catalytic subunit of the periplasmic nitrate reductase complex NapAB. Receives electrons from NapB and catalyzes the reduction of nitrate to nitrite. The sequence is that of Periplasmic nitrate reductase from Shewanella halifaxensis (strain HAW-EB4).